The sequence spans 333 residues: Ketol-acid reductoisomerase (NADP(+)) (333 aa).

Residues 2 to 182 enclose the KARI N-terminal Rossmann domain; that stretch reads AKMYYDSDAS…GCTRAGVLET (181 aa). Residues 25 to 28, R48, S51, and 83 to 86 each bind NADP(+); these read YGSQ and DERQ. H108 is a catalytic residue. Residue G134 coordinates NADP(+). The KARI C-terminal knotted domain maps to 183–328; the sequence is TFKEETETDL…AELRAMMPFI (146 aa). Residues D191, E195, E227, and E231 each contribute to the Mg(2+) site. S252 serves as a coordination point for substrate.

Belongs to the ketol-acid reductoisomerase family. Mg(2+) serves as cofactor.

It carries out the reaction (2R)-2,3-dihydroxy-3-methylbutanoate + NADP(+) = (2S)-2-acetolactate + NADPH + H(+). It catalyses the reaction (2R,3R)-2,3-dihydroxy-3-methylpentanoate + NADP(+) = (S)-2-ethyl-2-hydroxy-3-oxobutanoate + NADPH + H(+). It participates in amino-acid biosynthesis; L-isoleucine biosynthesis; L-isoleucine from 2-oxobutanoate: step 2/4. The protein operates within amino-acid biosynthesis; L-valine biosynthesis; L-valine from pyruvate: step 2/4. In terms of biological role, involved in the biosynthesis of branched-chain amino acids (BCAA). Catalyzes an alkyl-migration followed by a ketol-acid reduction of (S)-2-acetolactate (S2AL) to yield (R)-2,3-dihydroxy-isovalerate. In the isomerase reaction, S2AL is rearranged via a Mg-dependent methyl migration to produce 3-hydroxy-3-methyl-2-ketobutyrate (HMKB). In the reductase reaction, this 2-ketoacid undergoes a metal-dependent reduction by NADPH to yield (R)-2,3-dihydroxy-isovalerate. This chain is Ketol-acid reductoisomerase (NADP(+)), found in Desulfitobacterium hafniense (strain DSM 10664 / DCB-2).